Reading from the N-terminus, the 309-residue chain is Porphobilinogen deaminase (309 aa).

Cysteine 241 is modified (S-(dipyrrolylmethanemethyl)cysteine).

This sequence belongs to the HMBS family. As to quaternary structure, monomer. The cofactor is dipyrromethane.

It carries out the reaction 4 porphobilinogen + H2O = hydroxymethylbilane + 4 NH4(+). Its pathway is porphyrin-containing compound metabolism; protoporphyrin-IX biosynthesis; coproporphyrinogen-III from 5-aminolevulinate: step 2/4. Its function is as follows. Tetrapolymerization of the monopyrrole PBG into the hydroxymethylbilane pre-uroporphyrinogen in several discrete steps. This chain is Porphobilinogen deaminase, found in Bacillus anthracis (strain A0248).